The following is a 428-amino-acid chain: Adenylosuccinate synthetase (428 aa).

GTP-binding positions include 11 to 17 and 39 to 41; these read GDEGKGK and GHT. D12 serves as the catalytic Proton acceptor. D12 and G39 together coordinate Mg(2+). IMP is bound by residues 12 to 15, 37 to 40, T130, R144, N226, T241, and R305; these read DEGK and NAGH. Catalysis depends on H40, which acts as the Proton donor. 301-307 serves as a coordination point for substrate; it reads VTTGRKR. Residues R307, 333-335, and 415-417 each bind GTP; these read KLD and GTG.

The protein belongs to the adenylosuccinate synthetase family. In terms of assembly, homodimer. Requires Mg(2+) as cofactor.

It is found in the cytoplasm. It catalyses the reaction IMP + L-aspartate + GTP = N(6)-(1,2-dicarboxyethyl)-AMP + GDP + phosphate + 2 H(+). Its pathway is purine metabolism; AMP biosynthesis via de novo pathway; AMP from IMP: step 1/2. Its function is as follows. Plays an important role in the de novo pathway and in the salvage pathway of purine nucleotide biosynthesis. Catalyzes the first committed step in the biosynthesis of AMP from IMP. This is Adenylosuccinate synthetase from Candida tropicalis (strain ATCC MYA-3404 / T1) (Yeast).